The sequence spans 1410 residues: DNA-directed RNA polymerase subunit beta' (1410 aa).

Cysteine 70, cysteine 72, cysteine 85, and cysteine 88 together coordinate Zn(2+). Mg(2+) contacts are provided by aspartate 460, aspartate 462, and aspartate 464. The Zn(2+) site is built by cysteine 814, cysteine 888, cysteine 895, and cysteine 898.

Belongs to the RNA polymerase beta' chain family. In terms of assembly, the RNAP catalytic core consists of 2 alpha, 1 beta, 1 beta' and 1 omega subunit. When a sigma factor is associated with the core the holoenzyme is formed, which can initiate transcription. Mg(2+) is required as a cofactor. It depends on Zn(2+) as a cofactor.

The enzyme catalyses RNA(n) + a ribonucleoside 5'-triphosphate = RNA(n+1) + diphosphate. Functionally, DNA-dependent RNA polymerase catalyzes the transcription of DNA into RNA using the four ribonucleoside triphosphates as substrates. This is DNA-directed RNA polymerase subunit beta' from Shewanella denitrificans (strain OS217 / ATCC BAA-1090 / DSM 15013).